Consider the following 120-residue polypeptide: UPF0102 protein Moth_0988 (120 aa).

Belongs to the UPF0102 family.

The protein is UPF0102 protein Moth_0988 of Moorella thermoacetica (strain ATCC 39073 / JCM 9320).